The chain runs to 365 residues: Large ribosomal subunit protein uL3 (365 aa).

The tract at residues 343–365 is disordered; the sequence is RPPKKKPPVQRPQITYVSVESKQ. A compositionally biased stretch (polar residues) spans 354–365; that stretch reads PQITYVSVESKQ.

Belongs to the universal ribosomal protein uL3 family. In terms of assembly, part of the 50S ribosomal subunit. Forms a cluster with proteins L14 and L24e.

One of the primary rRNA binding proteins, it binds directly near the 3'-end of the 23S rRNA, where it nucleates assembly of the 50S subunit. In Pyrococcus furiosus (strain ATCC 43587 / DSM 3638 / JCM 8422 / Vc1), this protein is Large ribosomal subunit protein uL3.